Reading from the N-terminus, the 609-residue chain is DNA polymerase alpha subunit B (609 aa).

Ser-155 carries the phosphoserine modification. Thr-164 is modified (phosphothreonine). Phosphoserine is present on residues Ser-166 and Ser-168.

The protein belongs to the DNA polymerase alpha subunit B family. As to quaternary structure, component of the alpha DNA polymerase complex (also known as the alpha DNA polymerase-primase complex) consisting of four subunits: the catalytic subunit PolA1, the regulatory subunit PolA2, and the primase complex subunits Prim1 and Prim2 respectively. PolA1 associates with the DNA primase complex before association with PolA2. Post-translationally, phosphorylated in embryos until cycle 13. Expressed in embryos (at protein level).

The protein resides in the nucleus. Functionally, accessory subunit of the DNA polymerase alpha complex (also known as the alpha DNA polymerase-primase complex) which plays an essential role in the initiation of DNA synthesis. During the S phase of the cell cycle, the DNA polymerase alpha complex (composed of a catalytic subunit PolA1, an accessory subunit PolA2 and two primase subunits, the catalytic subunit Prim1 and the regulatory subunit Prim2) is recruited to DNA at the replicative forks. The primase subunit of the polymerase alpha complex initiates DNA synthesis by oligomerising short RNA primers on both leading and lagging strands. These primers are initially extended by the polymerase alpha catalytic subunit and subsequently transferred to polymerase delta and polymerase epsilon for processive synthesis on the lagging and leading strand, respectively. This chain is DNA polymerase alpha subunit B, found in Drosophila melanogaster (Fruit fly).